Reading from the N-terminus, the 485-residue chain is ATP synthase subunit beta (485 aa).

170 to 177 (GGAGVGKT) provides a ligand contact to ATP.

It belongs to the ATPase alpha/beta chains family. As to quaternary structure, F-type ATPases have 2 components, CF(1) - the catalytic core - and CF(0) - the membrane proton channel. CF(1) has five subunits: alpha(3), beta(3), gamma(1), delta(1), epsilon(1). CF(0) has three main subunits: a(1), b(2) and c(9-12). The alpha and beta chains form an alternating ring which encloses part of the gamma chain. CF(1) is attached to CF(0) by a central stalk formed by the gamma and epsilon chains, while a peripheral stalk is formed by the delta and b chains.

The protein localises to the cell membrane. The catalysed reaction is ATP + H2O + 4 H(+)(in) = ADP + phosphate + 5 H(+)(out). Functionally, produces ATP from ADP in the presence of a proton gradient across the membrane. The catalytic sites are hosted primarily by the beta subunits. The chain is ATP synthase subunit beta from Salinispora arenicola (strain CNS-205).